Here is a 394-residue protein sequence, read N- to C-terminus: E3 ubiquitin-protein ligase RNF149 (394 aa).

Positions 1–31 (MAARRRPAAGVGARDALAVLALALCTPGVGG) are cleaved as a signal peptide. N-linked (GlcNAc...) asparagine glycosylation is found at Asn51 and Asn141. The PA domain occupies 66-171 (SSLREERQGL…PKGREIFDLV (106 aa)). Residues 197-217 (VVFVAIAFITMMIISLAWLIF) form a helical membrane-spanning segment. The RING-type; atypical zinc-finger motif lies at 265-306 (CAVCIENFKVKDVIRILPCKHIFHRICIDPWLLDHRTCPMCK). The interval 321-394 (DTQELPTPEA…SEPQHGGSIC (74 aa)) is disordered. Thr327 is modified (phosphothreonine). The N-linked (GlcNAc...) asparagine glycan is linked to Asn339. Residues Ser341 and Ser344 each carry the phosphoserine modification. Low complexity predominate over residues 352–362 (SNLPSSSSSES).

It localises to the membrane. The catalysed reaction is S-ubiquitinyl-[E2 ubiquitin-conjugating enzyme]-L-cysteine + [acceptor protein]-L-lysine = [E2 ubiquitin-conjugating enzyme]-L-cysteine + N(6)-ubiquitinyl-[acceptor protein]-L-lysine.. It participates in protein modification; protein ubiquitination. Its function is as follows. E3 ubiquitin-protein ligase. Ubiquitinates BRAF, inducing its proteasomal degradation. The sequence is that of E3 ubiquitin-protein ligase RNF149 (Rnf149) from Mus musculus (Mouse).